The primary structure comprises 1485 residues: Glutamate receptor ionotropic, NMDA 2B (1485 aa).

An N-terminal signal peptide occupies residues Met1–Ala26. The Extracellular segment spans residues Arg27–Asp557. N-linked (GlcNAc...) asparagine glycosylation is present at Asn74. Cys86 and Cys321 form a disulfide bridge. 2 residues coordinate Zn(2+): His127 and Glu284. 4 N-linked (GlcNAc...) asparagine glycosylation sites follow: Asn341, Asn348, Asn444, and Asn491. Disulfide bonds link Cys429–Cys456 and Cys436–Cys457. Positions 514 and 519 each coordinate L-glutamate. An N-linked (GlcNAc...) asparagine glycan is attached at Asn542. The helical transmembrane segment at Val558–Val576 threads the bilayer. The Cytoplasmic segment spans residues Phe577–Gly603. An intramembrane region (discontinuously helical) is located at residues Lys604–Pro623. A pore-forming region spans residues Lys604 to Pro623. Over Lys624–Ile630 the chain is Cytoplasmic. A helical transmembrane segment spans residues Met631–Tyr646. Over Thr647 to Asn817 the chain is Extracellular. Asn688 is a glycosylation site (N-linked (GlcNAc...) asparagine). Residues Ser690–Thr691 and Asp732 contribute to the L-glutamate site. A disulfide bridge connects residues Cys746 and Cys801. The chain crosses the membrane as a helical span at residues Met818 to Ile837. Over Cys838–Val1485 the chain is Cytoplasmic. Phosphoserine is present on residues Ser882, Ser886, Ser917, and Ser920. A phosphotyrosine mark is found at Tyr962 and Tyr1039. 3 positions are modified to phosphoserine: Ser1058, Ser1061, and Ser1064. Residues Glu1074–Lys1097 are disordered. 2 positions are modified to phosphotyrosine: Tyr1109 and Tyr1133. Position 1143 is a phosphoserine (Ser1143). Position 1155 is a phosphotyrosine (Tyr1155). Positions Phe1162–Pro1194 are disordered. A phosphoserine mark is found at Ser1255 and Ser1259. Positions Pro1269–Ser1278 are enriched in low complexity. The interval Pro1269–His1302 is disordered. Positions Lys1280 to Lys1289 are enriched in polar residues. A compositionally biased stretch (basic residues) spans Ala1290 to Gln1301. An interaction with DAPK1 region spans residues Lys1292 to Tyr1304. Residue Ser1303 is modified to Phosphoserine; by DAPK1. Tyr1475 bears the Phosphotyrosine mark. Residues Ser1483–Val1485 carry the PDZ-binding motif.

It belongs to the glutamate-gated ion channel (TC 1.A.10.1) family. NR2B/GRIN2B subfamily. Heterotetramer. Forms heterotetrameric channels composed of two GluN1/zeta subunits (GRIN1), and two identical GluN2/epsilon subunits (GRIN2A, GRIN2B, GRIN2C or GRIN2D) or GluN3 subunits (GRIN3A or GRIN3B) (in vitro). Can also form heterotetrameric channels that contain at least two GluN1 subunits and at least two different GluN2 subunits (or a combination of one GluN2 and one GluN3 subunits) (in vitro). In vivo, the subunit composition may depend on the expression levels of the different subunits. Found in a complex with GRIN1, GRIN3A and PPP2CB. Found in a complex with GRIN1 and GRIN3B. Interacts with MAGI3. Interacts with HIP1 and Neto1. Interacts with PDZ domains of PATJ, DLG3 and DLG4. Interacts with DAPK1. Found in a complex with GRIN1 and PRR7. Interacts with PRR7. Interacts with CAMK2A. Interacts with ARC; preventing ARC oligomerization. Interacts with TMEM25. Interacts (via the extreme C-terminus) with FRMPD2 (via the second PDZ domain); the interaction is direct and is likely to promote NMDAR-mediated neural signal transmission. Interacts with FAM81A; the interaction facilitates condensate formation via liquid-liquid phase separation. Post-translationally, phosphorylated on tyrosine residues. Phosphorylation at Ser-1303 by DAPK1 enhances synaptic NMDA receptor channel activity.

It is found in the cell membrane. It localises to the postsynaptic cell membrane. Its subcellular location is the cell projection. The protein localises to the dendrite. The protein resides in the late endosome. It is found in the lysosome. It localises to the cytoplasm. Its subcellular location is the cytoskeleton. The enzyme catalyses Ca(2+)(in) = Ca(2+)(out). It catalyses the reaction Na(+)(in) = Na(+)(out). It carries out the reaction K(+)(in) = K(+)(out). Component of N-methyl-D-aspartate (NMDA) receptors (NMDARs) that function as heterotetrameric, ligand-gated cation channels with high calcium permeability and voltage-dependent block by Mg(2+). Participates in synaptic plasticity for learning and memory formation by contributing to the long-term depression (LTD) of hippocampus membrane currents. Channel activation requires binding of the neurotransmitter L-glutamate to the GluN2 subunit, glycine or D-serine binding to the GluN1 subunit, plus membrane depolarization to eliminate channel inhibition by Mg(2+). NMDARs mediate simultaneously the potasium efflux and the influx of calcium and sodium. Each GluN2 subunit confers differential attributes to channel properties, including activation, deactivation and desensitization kinetics, pH sensitivity, Ca2(+) permeability, and binding to allosteric modulators. In concert with DAPK1 at extrasynaptic sites, acts as a central mediator for stroke damage. Its phosphorylation at Ser-1303 by DAPK1 enhances synaptic NMDA receptor channel activity inducing injurious Ca2+ influx through them, resulting in an irreversible neuronal death. The polypeptide is Glutamate receptor ionotropic, NMDA 2B (Canis lupus familiaris (Dog)).